A 372-amino-acid polypeptide reads, in one-letter code: Protein phosphatase Mn(2+)-dependent 1K (372 aa).

Residues 1-29 constitute a mitochondrion transit peptide; it reads MLSAAFITLLRSGGNQVKKRVLLSSILLQ. Residues 46–61 are critical for association with the BCKDH complex; the sequence is RCSRFDPDGSGQPATW. Residues 94 to 346 enclose the PPM-type phosphatase domain; sequence NVGCASLIGK…DNSTAVVVPF (253 aa). The Mn(2+) site is built by aspartate 127 and glycine 128. At serine 248 the chain carries Phosphoserine. The Mn(2+) site is built by aspartate 298 and aspartate 337.

This sequence belongs to the PP2C family. In terms of assembly, monomer. Interacts with E1 and E2 components of the branched-chain alpha-ketoacid dehydrogenase (BCKDH) complex; this interaction requires colocalization in mitochondria. Interacts with BCKDHA but not with BCKDHB of the E1 component. Interacts with the 24-meric E2 core composed of DBT monomers with a 24:1 stoichiometry; the N-terminal region (residues 49-61) of PPM1K and C-terminal linker of the lipoyl domain of DBT (residues 145-160) are critical for this interaction, whereas the lipoyl prosthetic group is dispensable. Competes with BCKDK for binding to the E2 core; this interaction is modulated by branched-chain alpha-keto acids. At steady state, BCKDH holoenzyme preferentially binds BCKDK and BCKDHA is phosphorylated. In response to high levels of branched-chain alpha-keto acids, the inhibitory BCKDK is replaced by activating PPM1K leading to BCKDHA dephosphorylation and BCAA degradation. Mn(2+) is required as a cofactor. In terms of tissue distribution, highly expressed in the heart, kidney, brain and liver and to a lesser extent in testis, lung, spleen and adipose tissue. Very low amount in muscle (at protein level). Also expressed in the thymus (at protein level) and the diaphragm. Significantly reduced in hypertrophied hearts.

The protein localises to the mitochondrion matrix. The enzyme catalyses O-phospho-L-seryl-[3-methyl-2-oxobutanoate dehydrogenase] + H2O = L-seryl-[3-methyl-2-oxobutanoate dehydrogenase] + phosphate. It catalyses the reaction O-phospho-L-seryl-[protein] + H2O = L-seryl-[protein] + phosphate. It participates in protein modification. Functionally, serine/threonine-protein phosphatase component of macronutrients metabolism. Forms a functional kinase and phosphatase pair with BCKDK, serving as a metabolic regulatory node that coordinates branched-chain amino acids (BCAAs) with glucose and lipid metabolism via two distinct phosphoprotein targets: mitochondrial BCKDHA subunit of the branched-chain alpha-ketoacid dehydrogenase (BCKDH) complex and cytosolic ACLY, a lipogenic enzyme of Krebs cycle. At high levels of branched-chain ketoacids, dephosphorylates and activates mitochondrial BCKDH complex, a multisubunit complex consisting of three multimeric components each involved in different steps of BCAA catabolism: E1 composed of BCKDHA and BCKDHB, E2 core composed of DBT monomers, and E3 composed of DLD monomers. Tightly associates with the E2 component of BCKDH complex and dephosphorylates BCKDHA on Ser-334. Regulates the reversible phosphorylation of ACLY in response to changes in cellular carbohydrate abundance such as occurs during fasting to feeding metabolic transition. At fasting state, appears to dephosphorylate ACLY on Ser-455 and inactivate it. Refeeding stimulates MLXIPL/ChREBP transcription factor, leading to increased BCKDK to PPM1K expression ratio, phosphorylation and activation of ACLY that ultimately results in the generation of malonyl-CoA and oxaloacetate immediate substrates of de novo lipogenesis and gluconeogenesis, respectively. Recognizes phosphosites having SxS or RxxS motifs and strictly depends on Mn(2+) ions for the phosphatase activity. Regulates Ca(2+)-induced opening of mitochondrial transition pore and apoptotic cell death. The sequence is that of Protein phosphatase Mn(2+)-dependent 1K from Mus musculus (Mouse).